We begin with the raw amino-acid sequence, 574 residues long: Glycine--tRNA ligase (574 aa).

Substrate-binding residues include R96 and E162. ATP contacts are provided by residues 194-196, 204-209, 327-328, and 450-453; these read RNE, IRLREF, EC, and GIDR. 209–213 provides a ligand contact to substrate; it reads FTQAE. Substrate is bound at residue 446–450; sequence EPSYG.

The protein belongs to the class-II aminoacyl-tRNA synthetase family.

The protein localises to the cytoplasm. It catalyses the reaction tRNA(Gly) + glycine + ATP = glycyl-tRNA(Gly) + AMP + diphosphate. Its function is as follows. Catalyzes the attachment of glycine to tRNA(Gly). In Methanococcus maripaludis (strain C6 / ATCC BAA-1332), this protein is Glycine--tRNA ligase.